Reading from the N-terminus, the 269-residue chain is Formamidopyrimidine-DNA glycosylase (269 aa).

Residue proline 2 is the Schiff-base intermediate with DNA of the active site. The active-site Proton donor is glutamate 3. Lysine 57 serves as the catalytic Proton donor; for beta-elimination activity. DNA is bound by residues histidine 90, arginine 109, and lysine 150. An FPG-type zinc finger spans residues glutamine 235–lysine 269. Residue arginine 259 is the Proton donor; for delta-elimination activity of the active site.

It belongs to the FPG family. In terms of assembly, monomer. Zn(2+) is required as a cofactor.

It carries out the reaction Hydrolysis of DNA containing ring-opened 7-methylguanine residues, releasing 2,6-diamino-4-hydroxy-5-(N-methyl)formamidopyrimidine.. It catalyses the reaction 2'-deoxyribonucleotide-(2'-deoxyribose 5'-phosphate)-2'-deoxyribonucleotide-DNA = a 3'-end 2'-deoxyribonucleotide-(2,3-dehydro-2,3-deoxyribose 5'-phosphate)-DNA + a 5'-end 5'-phospho-2'-deoxyribonucleoside-DNA + H(+). In terms of biological role, involved in base excision repair of DNA damaged by oxidation or by mutagenic agents. Acts as a DNA glycosylase that recognizes and removes damaged bases. Has a preference for oxidized purines, such as 7,8-dihydro-8-oxoguanine (8-oxoG). Has AP (apurinic/apyrimidinic) lyase activity and introduces nicks in the DNA strand. Cleaves the DNA backbone by beta-delta elimination to generate a single-strand break at the site of the removed base with both 3'- and 5'-phosphates. In Escherichia coli O157:H7, this protein is Formamidopyrimidine-DNA glycosylase.